The primary structure comprises 224 residues: Probable C-&gt;U-editing enzyme APOBEC-2 (224 aa).

The tract at residues M1 to E25 is disordered. 2 residues coordinate Zn(2+): E60 and H98. The 106-residue stretch at G64–L169 folds into the CMP/dCMP-type deaminase domain. The Proton donor role is filled by E100. The Zn(2+) site is built by C128 and C131.

It belongs to the cytidine and deoxycytidylate deaminase family. In terms of assembly, homotetramer. The cofactor is Zn(2+).

The enzyme catalyses cytidine(6666) in apoB mRNA + H2O + H(+) = uridine(6666) in apoB mRNA + NH4(+). In terms of biological role, probable C to U editing enzyme whose physiological substrate is not yet known. Does not display detectable apoB mRNA editing. Has a low intrinsic cytidine deaminase activity. May play a role in the epigenetic regulation of gene expression through the process of active DNA demethylation. This Bos taurus (Bovine) protein is Probable C-&gt;U-editing enzyme APOBEC-2 (APOBEC2).